Consider the following 697-residue polypeptide: uncharacterized protein (697 aa).

Positions 24-51 (CIRCRQKKIKCSGEKPSCQACSNNKVEC) form a DNA-binding region, zn(2)-C6 fungal-type. Residues 500-520 (YIMSPFVGFSILTAATIHMLL) form a helical membrane-spanning segment.

Its subcellular location is the nucleus membrane. This is an uncharacterized protein from Schizosaccharomyces pombe (strain 972 / ATCC 24843) (Fission yeast).